The sequence spans 384 residues: Putative glutamate--cysteine ligase 2-1 (384 aa).

The protein belongs to the glutamate--cysteine ligase type 2 family. YbdK subfamily.

The enzyme catalyses L-cysteine + L-glutamate + ATP = gamma-L-glutamyl-L-cysteine + ADP + phosphate + H(+). Functionally, ATP-dependent carboxylate-amine ligase which exhibits weak glutamate--cysteine ligase activity. The chain is Putative glutamate--cysteine ligase 2-1 from Paenarthrobacter aurescens (strain TC1).